Reading from the N-terminus, the 144-residue chain is 3-hydroxyacyl-[acyl-carrier-protein] dehydratase FabZ (144 aa).

The active site involves His52.

The protein belongs to the thioester dehydratase family. FabZ subfamily.

It is found in the cytoplasm. It carries out the reaction a (3R)-hydroxyacyl-[ACP] = a (2E)-enoyl-[ACP] + H2O. Functionally, involved in unsaturated fatty acids biosynthesis. Catalyzes the dehydration of short chain beta-hydroxyacyl-ACPs and long chain saturated and unsaturated beta-hydroxyacyl-ACPs. This chain is 3-hydroxyacyl-[acyl-carrier-protein] dehydratase FabZ, found in Syntrophomonas wolfei subsp. wolfei (strain DSM 2245B / Goettingen).